A 320-amino-acid chain; its full sequence is Lactamase-like protein GME11357 (320 aa).

Residues H106, H108, D110, and H111 each contribute to the Zn(2+) site. Residue D110 is the Proton donor/acceptor of the active site.

It belongs to the metallo-beta-lactamase superfamily. Zn(2+) is required as a cofactor.

It functions in the pathway secondary metabolite biosynthesis. Lactamase-like protein; part of the gene cluster that mediates the biosynthesis of dibenzodioxocinones such as pestalotiollide B, a novel class of inhibitors against cholesterol ester transfer protein (CEPT). The biosynthesis initiates from condensation of acetate and malonate units catalyzed by the non-reducing PKS pks8/GME11356. Pks8/GME11356 lacks a thioesterase (TE) domain, which is important to the cyclizing of the third ring of atrochrysone carboxylic acid, and the esterase GME11355 might play the role of TE and catalyzes the cyclization reaction of the C ring. The lactamase-like protein GME11357 (or other beta-lactamases in Pestalotiopsis microspora) probably hydrolyzes the thioester bond between the ACP of pks8/GME11356 and the intermediate to release atrochrysone carboxylic acid, which is spontaneously dehydrates to form endocrocin anthrone. Endocrocin anthrone is further converted to emodin via the endocrocin intermediate. Emodin is then oxidized by several enzymes such as the Baeyer-Villiger oxidase GME11358, the oxidoreductase GME11367, the short chain dehydrogenase/reductase GME11373, as well as by other oxidoreductases from the cluster, to modify the A and C rings and open the B ring, and finally yield monodictyphenone. The prenyltransferase GME11375 may catalyze the addition reaction between the C5 side chains and the carbon bone of dibenzodioxocinones. The remaining biochemical reactions to the final product dibenzodioxocinones should be methylation catalyzed by methyltransferase GME11366 and reduction and lactonization reaction catalyzed by a series of oxidordeuctases. The protein is Lactamase-like protein GME11357 of Pestalotiopsis microspora.